The sequence spans 153 residues: Aspartate carbamoyltransferase regulatory chain (153 aa).

Zn(2+)-binding residues include cysteine 109, cysteine 114, cysteine 138, and cysteine 141.

The protein belongs to the PyrI family. As to quaternary structure, contains catalytic and regulatory chains. It depends on Zn(2+) as a cofactor.

Its function is as follows. Involved in allosteric regulation of aspartate carbamoyltransferase. This chain is Aspartate carbamoyltransferase regulatory chain, found in Cenarchaeum symbiosum (strain A).